Consider the following 1669-residue polypeptide: Collagen alpha-1(IV) chain (1669 aa).

An N-terminal signal peptide occupies residues 1-27; the sequence is MGPRLSVWLLLLPAALLLHEEHSRAAA. A propeptide spans 28 to 172 (N-terminal propeptide (7S domain)); it reads KGGCAGSGCG…LGHVPGMLLK (145 aa). Disordered stretches follow at residues 48–459, 504–1382, and 1404–1431; these read KGER…EIGE, GRDG…PKGQ, and PGQK…DGLP. N-linked (GlcNAc...) asparagine glycosylation is present at Asn126. Positions 173–1440 are triple-helical region; sequence GERGFPGIPG…PGSMGPPGTP (1268 aa). Pro residues predominate over residues 196–214; that stretch reads VGPPGFTGPPGPPGPPGPP. A 3-hydroxyproline mark is found at Pro204, Pro207, and Pro210. Residues 234 to 249 show a composition bias toward low complexity; the sequence is QGVSGPPGVPGQAQVQ. 2 stretches are compositionally biased toward basic and acidic residues: residues 250-263 and 289-298; these read EKGD…KGQK and PGKDGDKGEK. 3 stretches are compositionally biased toward pro residues: residues 367–376, 413–424, and 436–448; these read PGQPGPPGLP, PGPPGSPGPPGQ, and PGPP…PGIP. Basic and acidic residues predominate over residues 535 to 545; the sequence is FDLRLKGDKGD. Residues 586-595 show a composition bias toward gly residues; that stretch reads GPPGGVGFPG. 3-hydroxyproline is present on residues Pro587 and Pro602. Pro603 carries the 4-hydroxyproline modification. Pro605 carries the 3-hydroxyproline modification. Position 606 is a 4-hydroxyproline (Pro606). Over residues 611 to 620 the composition is skewed to low complexity; the sequence is AGPIGDKGQA. Residues 621–630 are compositionally biased toward gly residues; it reads GFPGGPGSPG. Pro623, Pro626, Pro629, and Pro632 each carry 4-hydroxyproline. Residue Pro647 is modified to 3-hydroxyproline. Residues 797 to 817 are compositionally biased toward gly residues; that stretch reads GVPGIGPPGARGPPGGQGPPG. 2 stretches are compositionally biased toward low complexity: residues 856–875 and 977–986; these read QSGL…PGFP and PGKDGQAGQP. A compositionally biased stretch (gly residues) spans 1011 to 1020; it reads GSVGGMGLPG. Residues 1086 to 1114 are compositionally biased toward low complexity; that stretch reads SIGIPGMPGSPGLKGSPGSVGYPGSPGLP. A 3-hydroxyproline modification is found at Pro1214. Over residues 1247–1258 the composition is skewed to pro residues; it reads PGLPGPMGPPGL. Residues 1290–1299 show a composition bias toward gly residues; the sequence is GMPGIGGSPG. A compositionally biased stretch (low complexity) spans 1368–1382; sequence PGLKGLQGLPGPKGQ. At Pro1424 the chain carries 3-hydroxyproline. One can recognise a Collagen IV NC1 domain in the interval 1445–1669; sequence GFLVTRHSQT…SRCQVCMRRT (225 aa). Cystine bridges form between Cys1460–Cys1551, Cys1493–Cys1548, Cys1505–Cys1511, Cys1570–Cys1665, Cys1604–Cys1662, and Cys1616–Cys1622. Met1533 is covalently cross-linked (S-Lysyl-methionine sulfilimine (Met-Lys) (interchain with K-1651)). Lys1651 participates in a covalent cross-link: S-Lysyl-methionine sulfilimine (Lys-Met) (interchain with M-1533).

This sequence belongs to the type IV collagen family. As to quaternary structure, there are six type IV collagen isoforms, alpha 1(IV)-alpha 6(IV), each of which can form a triple helix structure with 2 other chains to generate type IV collagen network. Interacts with EFEMP2. Post-translationally, lysines at the third position of the tripeptide repeating unit (G-X-Y) are hydroxylated. The modified lysines can be O-glycosylated. Contains 4-hydroxyproline. Prolines at the third position of the tripeptide repeating unit (G-X-Y) are hydroxylated in some or all of the chains. In terms of processing, contains 3-hydroxyproline. This modification occurs on the first proline residue in the sequence motif Gly-Pro-Hyp, where Hyp is 4-hydroxyproline. Post-translationally, type IV collagens contain numerous cysteine residues which are involved in inter- and intramolecular disulfide bonding. 12 of these, located in the NC1 domain, are conserved in all known type IV collagens. The trimeric structure of the NC1 domains is stabilized by covalent bonds (sulfilimine cross-links) between Lys and Met residues. These cross-links are important for the mechanical stability of the basement membrane. Sulfilimine cross-link is catalyzed by PXDN. In terms of processing, proteolytic processing produces the C-terminal NC1 peptide, arresten. Highly expressed in placenta.

The protein resides in the secreted. It localises to the extracellular space. The protein localises to the extracellular matrix. Its subcellular location is the basement membrane. Type IV collagen is the major structural component of glomerular basement membranes (GBM), forming a 'chicken-wire' meshwork together with laminins, proteoglycans and entactin/nidogen. Its function is as follows. Arresten, comprising the C-terminal NC1 domain, inhibits angiogenesis and tumor formation. The C-terminal half is found to possess the anti-angiogenic activity. Specifically inhibits endothelial cell proliferation, migration and tube formation. This chain is Collagen alpha-1(IV) chain, found in Homo sapiens (Human).